Consider the following 252-residue polypeptide: tRNA (guanine-N(1)-)-methyltransferase (252 aa).

Residues Gly116 and 135–140 contribute to the S-adenosyl-L-methionine site; that span reads LGDYVL.

Belongs to the RNA methyltransferase TrmD family. In terms of assembly, homodimer.

It localises to the cytoplasm. The catalysed reaction is guanosine(37) in tRNA + S-adenosyl-L-methionine = N(1)-methylguanosine(37) in tRNA + S-adenosyl-L-homocysteine + H(+). In terms of biological role, specifically methylates guanosine-37 in various tRNAs. The protein is tRNA (guanine-N(1)-)-methyltransferase of Limosilactobacillus reuteri (strain DSM 20016) (Lactobacillus reuteri).